The following is a 433-amino-acid chain: MVAIKRLATVDADFKAQMDALLAFEAAQDEGIERTVIGILADVKARGDAAVVEYSNKFDRLTASSMADLELSKAEMQKALDGLPADQRQALEAAAHRVRVYHEKQRMEGWSYTEADGTMLGQMITPLDRVGLYVPGGKAAYPSSVLMNAIPAKVAGVKELIMVVPTPGGEHNQLVLAAACLAGVDRVFTIGGAQAVGALAYGTEAVPQVDKIVGPGNAYVACAKRRVFGIVGIDMIAGPSEILVVADGSSDPDWVAMDLFSQAEHDELAQSILICTDAAYIDRVQASIEKLLPTMPRREVIETSLTNRGALILVRDLEEACAIANRVAPEHLELSLADPDPWVAKIHHAGAIFIGHYTSESLGDYCAGPNHVLPTSGSARFSSPLGVYDFQKRTSLIKVSKAGAQTLGKIASTLAHGEGLPAHAKSAEFRLEN.

NAD(+)-binding residues include tyrosine 133, glutamine 194, and asparagine 217. Positions 240, 262, and 265 each coordinate substrate. Residues glutamine 262 and histidine 265 each contribute to the Zn(2+) site. Residues glutamate 330 and histidine 331 each act as proton acceptor in the active site. Residues histidine 331, aspartate 364, glutamate 418, and histidine 423 each contribute to the substrate site. Aspartate 364 contacts Zn(2+). Histidine 423 is a binding site for Zn(2+).

This sequence belongs to the histidinol dehydrogenase family. Requires Zn(2+) as cofactor.

The catalysed reaction is L-histidinol + 2 NAD(+) + H2O = L-histidine + 2 NADH + 3 H(+). Its pathway is amino-acid biosynthesis; L-histidine biosynthesis; L-histidine from 5-phospho-alpha-D-ribose 1-diphosphate: step 9/9. Catalyzes the sequential NAD-dependent oxidations of L-histidinol to L-histidinaldehyde and then to L-histidine. The polypeptide is Histidinol dehydrogenase (Dechloromonas aromatica (strain RCB)).